The chain runs to 288 residues: Elongation factor Ts (288 aa).

Positions 80 to 83 (TDFL) are involved in Mg(2+) ion dislocation from EF-Tu.

The protein belongs to the EF-Ts family.

The protein resides in the cytoplasm. In terms of biological role, associates with the EF-Tu.GDP complex and induces the exchange of GDP to GTP. It remains bound to the aminoacyl-tRNA.EF-Tu.GTP complex up to the GTP hydrolysis stage on the ribosome. The polypeptide is Elongation factor Ts (Pseudomonas fluorescens (strain ATCC BAA-477 / NRRL B-23932 / Pf-5)).